The primary structure comprises 772 residues: Phenylalanine--tRNA ligase beta subunit (772 aa).

Residues 40–158 form the tRNA-binding domain; that stretch reads IKPSTNLVFA…DHYKTPNQIF (119 aa). The region spanning 397–468 is the B5 domain; sequence SVHNVIKNKI…KKISIQEIKP (72 aa). Mg(2+) contacts are provided by Asp446, Asp452, Glu455, and Asp456. In terms of domain architecture, FDX-ACB spans 691-772; that stretch reads SMYHDVIRDI…QEVNNYLKQF (82 aa).

This sequence belongs to the phenylalanyl-tRNA synthetase beta subunit family. Type 1 subfamily. As to quaternary structure, tetramer of two alpha and two beta subunits. Mg(2+) is required as a cofactor.

Its subcellular location is the cytoplasm. The catalysed reaction is tRNA(Phe) + L-phenylalanine + ATP = L-phenylalanyl-tRNA(Phe) + AMP + diphosphate + H(+). This chain is Phenylalanine--tRNA ligase beta subunit (pheT), found in Ureaplasma parvum serovar 3 (strain ATCC 700970).